The primary structure comprises 288 residues: Pyrroline-5-carboxylate reductase 3 (288 aa).

It belongs to the pyrroline-5-carboxylate reductase family. As to quaternary structure, homodecamer; composed of 5 homodimers.

It localises to the cytoplasm. It catalyses the reaction L-proline + NADP(+) = (S)-1-pyrroline-5-carboxylate + NADPH + 2 H(+). The catalysed reaction is L-proline + NAD(+) = (S)-1-pyrroline-5-carboxylate + NADH + 2 H(+). It functions in the pathway amino-acid biosynthesis; L-proline biosynthesis; L-proline from L-glutamate 5-semialdehyde: step 1/1. Oxidoreductase that catalyzes the last step in proline biosynthesis, which corresponds to the reduction of pyrroline-5-carboxylate (P5C) to L-proline using NAD(P)H. Proline is synthesized from either glutamate or ornithine; both are converted to P5C, and then to proline via pyrroline-5-carboxylate reductases (PYCRs). PYCR3 is exclusively linked to the biosynthesis of proline from ornithine. This is Pyrroline-5-carboxylate reductase 3 from Danio rerio (Zebrafish).